The sequence spans 184 residues: Type-1 fimbrial protein, A chain (184 aa).

The first 23 residues, 1-23 (MKIKTLAIVVLSALSLSSTAALA), serve as a signal peptide directing secretion. The cysteines at positions 46 and 86 are disulfide-linked.

Belongs to the fimbrial protein family.

It is found in the fimbrium. Its function is as follows. Fimbriae (also called pili), polar filaments radiating from the surface of the bacterium to a length of 0.5-1.5 micrometers and numbering 100-300 per cell, enable bacteria to colonize the epithelium of specific host organs. In Escherichia coli, this protein is Type-1 fimbrial protein, A chain.